Consider the following 59-residue polypeptide: Large ribosomal subunit protein bL32 (59 aa).

A disordered region spans residues 1 to 20; that stretch reads MAVQQNKKSKSKKGMRRSHD. Residues 7 to 19 are compositionally biased toward basic residues; the sequence is KKSKSKKGMRRSH.

This sequence belongs to the bacterial ribosomal protein bL32 family.

The polypeptide is Large ribosomal subunit protein bL32 (Nitratidesulfovibrio vulgaris (strain DSM 19637 / Miyazaki F) (Desulfovibrio vulgaris)).